The sequence spans 177 residues: Large ribosomal subunit protein uL6 (177 aa).

It belongs to the universal ribosomal protein uL6 family. Part of the 50S ribosomal subunit.

Functionally, this protein binds to the 23S rRNA, and is important in its secondary structure. It is located near the subunit interface in the base of the L7/L12 stalk, and near the tRNA binding site of the peptidyltransferase center. The sequence is that of Large ribosomal subunit protein uL6 from Rickettsia akari (strain Hartford).